We begin with the raw amino-acid sequence, 362 residues long: UDP-N-acetylglucosamine--N-acetylmuramyl-(pentapeptide) pyrophosphoryl-undecaprenol N-acetylglucosamine transferase (362 aa).

Residues Thr15–Gly17, Asn127, Arg165, Ser191, Ile247, Ala266–Glu271, and Gln292 each bind UDP-N-acetyl-alpha-D-glucosamine.

This sequence belongs to the glycosyltransferase 28 family. MurG subfamily.

The protein localises to the cell inner membrane. The enzyme catalyses di-trans,octa-cis-undecaprenyl diphospho-N-acetyl-alpha-D-muramoyl-L-alanyl-D-glutamyl-meso-2,6-diaminopimeloyl-D-alanyl-D-alanine + UDP-N-acetyl-alpha-D-glucosamine = di-trans,octa-cis-undecaprenyl diphospho-[N-acetyl-alpha-D-glucosaminyl-(1-&gt;4)]-N-acetyl-alpha-D-muramoyl-L-alanyl-D-glutamyl-meso-2,6-diaminopimeloyl-D-alanyl-D-alanine + UDP + H(+). Its pathway is cell wall biogenesis; peptidoglycan biosynthesis. In terms of biological role, cell wall formation. Catalyzes the transfer of a GlcNAc subunit on undecaprenyl-pyrophosphoryl-MurNAc-pentapeptide (lipid intermediate I) to form undecaprenyl-pyrophosphoryl-MurNAc-(pentapeptide)GlcNAc (lipid intermediate II). This Shewanella sp. (strain MR-4) protein is UDP-N-acetylglucosamine--N-acetylmuramyl-(pentapeptide) pyrophosphoryl-undecaprenol N-acetylglucosamine transferase.